We begin with the raw amino-acid sequence, 373 residues long: tRNA-specific 2-thiouridylase MnmA (373 aa).

Residues 12 to 19 and M38 contribute to the ATP site; that span reads GMSGGVDS. The interaction with target base in tRNA stretch occupies residues 98–100; the sequence is NPD. Residue C103 is the Nucleophile of the active site. The cysteines at positions 103 and 200 are disulfide-linked. G127 serves as a coordination point for ATP. The tract at residues 150–152 is interaction with tRNA; that stretch reads KDQ. C200 serves as the catalytic Cysteine persulfide intermediate. Positions 312-313 are interaction with tRNA; it reads RY.

It belongs to the MnmA/TRMU family.

The protein localises to the cytoplasm. It catalyses the reaction S-sulfanyl-L-cysteinyl-[protein] + uridine(34) in tRNA + AH2 + ATP = 2-thiouridine(34) in tRNA + L-cysteinyl-[protein] + A + AMP + diphosphate + H(+). Its function is as follows. Catalyzes the 2-thiolation of uridine at the wobble position (U34) of tRNA, leading to the formation of s(2)U34. The polypeptide is tRNA-specific 2-thiouridylase MnmA (Streptococcus pneumoniae serotype 19F (strain G54)).